A 536-amino-acid polypeptide reads, in one-letter code: Glyco-Gag protein (536 aa).

At 1–54 (MSGASSGTATGARLFGISSVLGEYRVLIGDEGAGPSRSPSEVSFSVWYRSRAAR) the chain is on the cytoplasmic side. Residues 55–75 (LVILCLVASFLVPCLTFLIAE) traverse the membrane as a helical segment. Over 76 to 536 (TVMGQTVTTP…TQNRNKDREE (461 aa)) the chain is Extracellular. Asn-137 carries N-linked (GlcNAc...) asparagine; by host glycosylation. Disordered regions lie at residues 174-284 (VRPF…NNRP) and 494-536 (ETPE…DREE). A compositionally biased stretch (pro residues) spans 177–198 (FLPPPKPPTPLPQPLSPQPSAP). The span at 199 to 209 (PTSSLYPVLPK) shows a compositional bias: low complexity. Composition is skewed to pro residues over residues 210–223 (TNPPKPPVLPPDPS) and 233–246 (EPPPYPGGHGPPPS). Residues 494 to 511 (ETPEEREERLWQRQEERD) are compositionally biased toward basic and acidic residues.

In terms of processing, glycosylated by host. Cleaved by host near the middle of the molecule, releasing the c-terminal half containing capsid and nucleoprotein domains op GAG.

Its subcellular location is the host cell membrane. In terms of biological role, plays a role in viral particle release. Presumably acts by facilitating the fission of the virion bud at the cell surface. This chain is Glyco-Gag protein, found in Feline sarcoma virus (strain McDonough).